We begin with the raw amino-acid sequence, 414 residues long: Na(+)-translocating NADH-quinone reductase subunit B (414 aa).

Transmembrane regions (helical) follow at residues 56–76 (IMIM…YNAG), 129–149 (FLPI…LFCM), and 164–184 (ILFA…LGIT). Threonine 236 carries the FMN phosphoryl threonine modification. Helical transmembrane passes span 268–288 (IPGS…AMIV), 297–317 (IIAG…VIGS), 325–345 (MPWH…FMAT), 358–378 (WWYG…NPAY), and 381–401 (GMML…HVVI).

This sequence belongs to the NqrB/RnfD family. Composed of six subunits; NqrA, NqrB, NqrC, NqrD, NqrE and NqrF. The cofactor is FMN.

It localises to the cell inner membrane. It carries out the reaction a ubiquinone + n Na(+)(in) + NADH + H(+) = a ubiquinol + n Na(+)(out) + NAD(+). This reaction is tightly coupled to the Na(+) pumping activity and specifically requires Na(+) for activity. Inhibited by korormicin and 2-N-heptyl-4-hydroxyquinoline N-oxide (HQNO). NQR complex catalyzes the reduction of ubiquinone-1 to ubiquinol by two successive reactions, coupled with the transport of Na(+) ions from the cytoplasm to the periplasm. NqrA to NqrE are probably involved in the second step, the conversion of ubisemiquinone to ubiquinol. In Vibrio alginolyticus, this protein is Na(+)-translocating NADH-quinone reductase subunit B.